We begin with the raw amino-acid sequence, 453 residues long: Histidine--tRNA ligase (453 aa).

This sequence belongs to the class-II aminoacyl-tRNA synthetase family. In terms of assembly, homodimer.

It is found in the cytoplasm. The catalysed reaction is tRNA(His) + L-histidine + ATP = L-histidyl-tRNA(His) + AMP + diphosphate + H(+). This Cytophaga hutchinsonii (strain ATCC 33406 / DSM 1761 / CIP 103989 / NBRC 15051 / NCIMB 9469 / D465) protein is Histidine--tRNA ligase.